The chain runs to 132 residues: Small ribosomal subunit protein uS8 (132 aa).

It belongs to the universal ribosomal protein uS8 family. Part of the 30S ribosomal subunit. Contacts proteins S5 and S12.

In terms of biological role, one of the primary rRNA binding proteins, it binds directly to 16S rRNA central domain where it helps coordinate assembly of the platform of the 30S subunit. The polypeptide is Small ribosomal subunit protein uS8 (Acidobacterium capsulatum (strain ATCC 51196 / DSM 11244 / BCRC 80197 / JCM 7670 / NBRC 15755 / NCIMB 13165 / 161)).